The following is a 244-amino-acid chain: 15,16-dihydrobiliverdin:ferredoxin oxidoreductase (244 aa).

It belongs to the HY2 family.

The catalysed reaction is 15,16-dihydrobiliverdin + oxidized 2[4Fe-4S]-[ferredoxin] = biliverdin IXalpha + reduced 2[4Fe-4S]-[ferredoxin] + 2 H(+). Catalyzes the two-electron reduction of biliverdin IX-alpha at the C15 methine bridge. This Gloeobacter violaceus (strain ATCC 29082 / PCC 7421) protein is 15,16-dihydrobiliverdin:ferredoxin oxidoreductase (pebA).